The primary structure comprises 268 residues: Indole-3-glycerol phosphate synthase (268 aa).

Belongs to the TrpC family.

The catalysed reaction is 1-(2-carboxyphenylamino)-1-deoxy-D-ribulose 5-phosphate + H(+) = (1S,2R)-1-C-(indol-3-yl)glycerol 3-phosphate + CO2 + H2O. Its pathway is amino-acid biosynthesis; L-tryptophan biosynthesis; L-tryptophan from chorismate: step 4/5. The sequence is that of Indole-3-glycerol phosphate synthase from Acinetobacter baumannii (strain SDF).